Consider the following 484-residue polypeptide: tRNA sulfurtransferase (484 aa).

Positions 63–167 (EAFADRLSCI…RENLYLVVNR (105 aa)) constitute a THUMP domain. ATP is bound by residues 185-186 (LI), Lys267, Gly289, and Gln298. Cys346 and Cys458 are disulfide-bonded. Positions 406–484 (VNSNEVIIDV…GYENVKVYRP (79 aa)) constitute a Rhodanese domain. Residue Cys458 is the Cysteine persulfide intermediate of the active site.

It belongs to the ThiI family.

It localises to the cytoplasm. It carries out the reaction [ThiI sulfur-carrier protein]-S-sulfanyl-L-cysteine + a uridine in tRNA + 2 reduced [2Fe-2S]-[ferredoxin] + ATP + H(+) = [ThiI sulfur-carrier protein]-L-cysteine + a 4-thiouridine in tRNA + 2 oxidized [2Fe-2S]-[ferredoxin] + AMP + diphosphate. The catalysed reaction is [ThiS sulfur-carrier protein]-C-terminal Gly-Gly-AMP + S-sulfanyl-L-cysteinyl-[cysteine desulfurase] + AH2 = [ThiS sulfur-carrier protein]-C-terminal-Gly-aminoethanethioate + L-cysteinyl-[cysteine desulfurase] + A + AMP + 2 H(+). It participates in cofactor biosynthesis; thiamine diphosphate biosynthesis. Catalyzes the ATP-dependent transfer of a sulfur to tRNA to produce 4-thiouridine in position 8 of tRNAs, which functions as a near-UV photosensor. Also catalyzes the transfer of sulfur to the sulfur carrier protein ThiS, forming ThiS-thiocarboxylate. This is a step in the synthesis of thiazole, in the thiamine biosynthesis pathway. The sulfur is donated as persulfide by IscS. This is tRNA sulfurtransferase from Shewanella sediminis (strain HAW-EB3).